Consider the following 175-residue polypeptide: Bifunctional protein PyrR (175 aa).

Residues 98–110 carry the PRPP-binding motif; it reads VIIIDDVLYTGRT.

It belongs to the purine/pyrimidine phosphoribosyltransferase family. PyrR subfamily. In terms of assembly, homodimer and homohexamer; in equilibrium.

It catalyses the reaction UMP + diphosphate = 5-phospho-alpha-D-ribose 1-diphosphate + uracil. Functionally, regulates transcriptional attenuation of the pyrimidine nucleotide (pyr) operon by binding in a uridine-dependent manner to specific sites on pyr mRNA. This disrupts an antiterminator hairpin in the RNA and favors formation of a downstream transcription terminator, leading to a reduced expression of downstream genes. In terms of biological role, also displays a weak uracil phosphoribosyltransferase activity which is not physiologically significant. This chain is Bifunctional protein PyrR, found in Staphylococcus aureus (strain bovine RF122 / ET3-1).